We begin with the raw amino-acid sequence, 38 residues long: Potassium channel toxin alpha-KTx 2.15 (38 aa).

Disulfide bonds link Cys7–Cys29, Cys13–Cys34, and Cys17–Cys36.

Belongs to the short scorpion toxin superfamily. Potassium channel inhibitor family. Alpha-KTx 02 subfamily. In terms of tissue distribution, expressed by the venom gland.

The protein localises to the secreted. Its function is as follows. Blocks human voltage-gated potassium channels Kv1.2/KCNA2 (IC(50)=0.3 nM), Kv1.3/KCNA3 (IC(50)=8.3 nM) and Shaker IR (with inactivation domain removed) (IC(50)=12 nM) and blocks intermediate conductance calcium-activated potassium channel KCa3.1/KCNN4 (IC(50)=6.4 nM). The protein is Potassium channel toxin alpha-KTx 2.15 of Centruroides tecomanus (Scorpion).